The chain runs to 79 residues: MKTLLIVLIKGYRNFISPLFPPSCRFQPTCSKYALEAVERFGVLHGGSLAIKRILRCHPFHPGGYDPVPLVDSSSKRSQ.

The protein belongs to the UPF0161 family.

It is found in the cell inner membrane. Functionally, could be involved in insertion of integral membrane proteins into the membrane. The polypeptide is Putative membrane protein insertion efficiency factor (Rippkaea orientalis (strain PCC 8801 / RF-1) (Cyanothece sp. (strain PCC 8801))).